The primary structure comprises 284 residues: 4-diphosphocytidyl-2-C-methyl-D-erythritol kinase (284 aa).

Residue Lys-10 is part of the active site. 92–102 provides a ligand contact to ATP; it reads PYGAGLGSGSS. Asp-134 is a catalytic residue.

It belongs to the GHMP kinase family. IspE subfamily.

The catalysed reaction is 4-CDP-2-C-methyl-D-erythritol + ATP = 4-CDP-2-C-methyl-D-erythritol 2-phosphate + ADP + H(+). Its pathway is isoprenoid biosynthesis; isopentenyl diphosphate biosynthesis via DXP pathway; isopentenyl diphosphate from 1-deoxy-D-xylulose 5-phosphate: step 3/6. Functionally, catalyzes the phosphorylation of the position 2 hydroxy group of 4-diphosphocytidyl-2C-methyl-D-erythritol. The polypeptide is 4-diphosphocytidyl-2-C-methyl-D-erythritol kinase (Salinibacter ruber (strain DSM 13855 / M31)).